An 803-amino-acid chain; its full sequence is H(+)/Cl(-) exchange transporter 7 (803 aa).

Residues 1 to 46 (MANVSKKVSWSGRDRDDEEGAPLLRRTGQPDEETPLLNGAGPGARQ) form a disordered region. Over 1–124 (MANVSKKVSW…TAFRTVEIKR (124 aa)) the chain is Cytoplasmic. A Phosphoserine modification is found at S9. A run of 2 helical transmembrane segments spans residues 125 to 157 (WVIC…YRVI) and 172 to 195 (FSLL…VAFI). Positions 201-205 (GSGIP) match the Selectivity filter part_1 motif. A chloride-binding site is contributed by S202. Residues 204–211 (IPQIKCFL) constitute an intramembrane region (helical). 2 helical membrane-spanning segments follow: residues 221-239 (RLKT…VVGG) and 245-262 (EGPM…ISQG). A Selectivity filter part_2 motif is present at residues 243–247 (GKEGP). Intramembrane regions (helical) lie at residues 286 to 298 (FVSA…VSAA) and 302 to 310 (PVGGVLFSL). The next 5 helical transmembrane spans lie at 320–339 (FLTW…LNFV), 373–403 (IPVF…FRIR), 408–430 (PCLQ…FVLI), 485–505 (PMTL…TYGL), and 510–533 (GVFI…LSYL). Residues 510–514 (GVFIP) carry the Selectivity filter part_3 motif. F512 is a binding site for chloride. Residues 543–557 (GKYALMGAAAQLGGI) constitute an intramembrane region (helical). The segment at residues 558–560 (VRM) is an intramembrane region (note=Loop between two helices). Positions 561 to 572 (TLSLTVIMMEAT) form an intramembrane region, helical. An intramembrane region (note=Loop between two helices) is located at residues 573–576 (SNVT). A helical transmembrane segment spans residues 577-595 (YGFPIMLVLMTAKIVGDVF). The Cytoplasmic portion of the chain corresponds to 596-803 (IEGLYDMHIQ…GLEELSLAQT (208 aa)). Chloride is bound at residue Y600. 2 consecutive CBS domains span residues 629–693 (MSTP…VFVE) and 739–797 (MNPS…GLEE). ATP-binding positions include 656-658 (HNG) and 781-784 (TRKD). Position 799 is a phosphoserine (S799).

This sequence belongs to the chloride channel (TC 2.A.49) family. ClC-7/CLCN7 subfamily. Chloride channel 7 are heteromers of alpha (CLCN7) and beta (OSTM1) subunits. Liver, spleen, kidneys and brain.

It localises to the lysosome membrane. The catalysed reaction is 2 chloride(in) + H(+)(out) = 2 chloride(out) + H(+)(in). Slowly voltage-gated channel mediating the exchange of chloride ions against protons. Functions as antiporter and contributes to the acidification of the lysosome lumen and may be involved in maintaining lysosomal pH. The CLC channel family contains both chloride channels and proton-coupled anion transporters that exchange chloride or another anion for protons. The presence of conserved gating glutamate residues is typical for family members that function as antiporters. This is H(+)/Cl(-) exchange transporter 7 from Mus musculus (Mouse).